The sequence spans 302 residues: Methionyl-tRNA formyltransferase (302 aa).

108-111 is a (6S)-5,6,7,8-tetrahydrofolate binding site; that stretch reads SLLP. A compositionally biased stretch (basic and acidic residues) spans 276–288; it reads REGKRPMEPEEFL. A disordered region spans residues 276-302; the sequence is REGKRPMEPEEFLRGFPLPEGSRAHTA.

The protein belongs to the Fmt family.

The enzyme catalyses L-methionyl-tRNA(fMet) + (6R)-10-formyltetrahydrofolate = N-formyl-L-methionyl-tRNA(fMet) + (6S)-5,6,7,8-tetrahydrofolate + H(+). Its function is as follows. Attaches a formyl group to the free amino group of methionyl-tRNA(fMet). The formyl group appears to play a dual role in the initiator identity of N-formylmethionyl-tRNA by promoting its recognition by IF2 and preventing the misappropriation of this tRNA by the elongation apparatus. In Cereibacter sphaeroides (strain ATCC 17029 / ATH 2.4.9) (Rhodobacter sphaeroides), this protein is Methionyl-tRNA formyltransferase.